Here is a 90-residue protein sequence, read N- to C-terminus: Probable Fe(2+)-trafficking protein (90 aa).

Belongs to the Fe(2+)-trafficking protein family.

In terms of biological role, could be a mediator in iron transactions between iron acquisition and iron-requiring processes, such as synthesis and/or repair of Fe-S clusters in biosynthetic enzymes. The protein is Probable Fe(2+)-trafficking protein of Hydrogenovibrio crunogenus (strain DSM 25203 / XCL-2) (Thiomicrospira crunogena).